The primary structure comprises 266 residues: 5'-nucleotidase SurE (266 aa).

A divalent metal cation is bound by residues Asp8, Asp9, Ser42, and Asn98.

Belongs to the SurE nucleotidase family. A divalent metal cation serves as cofactor.

The protein localises to the cytoplasm. It carries out the reaction a ribonucleoside 5'-phosphate + H2O = a ribonucleoside + phosphate. Functionally, nucleotidase that shows phosphatase activity on nucleoside 5'-monophosphates. This Methanocaldococcus jannaschii (strain ATCC 43067 / DSM 2661 / JAL-1 / JCM 10045 / NBRC 100440) (Methanococcus jannaschii) protein is 5'-nucleotidase SurE.